The sequence spans 79 residues: Suppressor of tumorigenicity 20 protein (79 aa).

Expressed in leukocytes, lung, spleen, liver, heart, kidney, muscle and uterine cervix. Down-regulated in cervical cancer.

Functionally, may act as a tumor suppressor. Promotes apoptosis of cancer cells. This Homo sapiens (Human) protein is Suppressor of tumorigenicity 20 protein (ST20).